The primary structure comprises 476 residues: MKVTLPDFRRAGVLVVGDVMLDRYWYGPTSRISPEAPVPVVKVDTIEERPGGAANVAMNIASLGAISRLVGLTGIDDAARALTSKLNEVQVRCDFVSVPTHPTITKLRVLSRNQQLIRLDFEEGFDGVDPQPIFERIQQALPQIGALVLSDYAKGALNSVQTMIQLARKAKVPVLIDPKGSDFERYRGATLLTPNLSEFEAVVGHCKNEEELVSRGMKLVADFELSALLVTRSEQGMTLLQPGKPPLHLPTQAQEVFDVTGAGDTVIGVLAAALAAGNSLEESCFLANAAAGVVVGKLGTSTVSPIELENAIRGRAETGFGVMDEQQLKKAVAQARQRGEKVVMTNGIFDILHAGHVSYLANARKLGDRLIVAVNSDASTKRLKGEKRPVNPLDQRMIVLGALEAVDWVVPFEEDTPQRLIADILPDLLVKGGDYKPDEIAGSAEVWAAGGEVKVLNFEDGVSTTNIIQSIKNGLG.

The ribokinase stretch occupies residues methionine 1–threonine 318. Asparagine 195–glutamate 198 lines the ATP pocket. Aspartate 264 is a catalytic residue. The tract at residues methionine 344 to glycine 476 is cytidylyltransferase.

The protein in the N-terminal section; belongs to the carbohydrate kinase PfkB family. This sequence in the C-terminal section; belongs to the cytidylyltransferase family. In terms of assembly, homodimer.

The enzyme catalyses D-glycero-beta-D-manno-heptose 7-phosphate + ATP = D-glycero-beta-D-manno-heptose 1,7-bisphosphate + ADP + H(+). The catalysed reaction is D-glycero-beta-D-manno-heptose 1-phosphate + ATP + H(+) = ADP-D-glycero-beta-D-manno-heptose + diphosphate. It participates in nucleotide-sugar biosynthesis; ADP-L-glycero-beta-D-manno-heptose biosynthesis; ADP-L-glycero-beta-D-manno-heptose from D-glycero-beta-D-manno-heptose 7-phosphate: step 1/4. It functions in the pathway nucleotide-sugar biosynthesis; ADP-L-glycero-beta-D-manno-heptose biosynthesis; ADP-L-glycero-beta-D-manno-heptose from D-glycero-beta-D-manno-heptose 7-phosphate: step 3/4. Functionally, catalyzes the phosphorylation of D-glycero-D-manno-heptose 7-phosphate at the C-1 position to selectively form D-glycero-beta-D-manno-heptose-1,7-bisphosphate. Its function is as follows. Catalyzes the ADP transfer from ATP to D-glycero-beta-D-manno-heptose 1-phosphate, yielding ADP-D-glycero-beta-D-manno-heptose. The polypeptide is Bifunctional protein HldE (Yersinia enterocolitica serotype O:8 / biotype 1B (strain NCTC 13174 / 8081)).